Consider the following 173-residue polypeptide: RNA 2',3'-cyclic phosphodiesterase (173 aa).

Catalysis depends on His38, which acts as the Proton donor. Short sequence motifs (HXTX) lie at residues 38-41 (HITV) and 118-121 (HLTI). Catalysis depends on His118, which acts as the Proton acceptor.

It belongs to the 2H phosphoesterase superfamily. ThpR family.

The catalysed reaction is a 3'-end 2',3'-cyclophospho-ribonucleotide-RNA + H2O = a 3'-end 2'-phospho-ribonucleotide-RNA + H(+). Its function is as follows. Hydrolyzes RNA 2',3'-cyclic phosphodiester to an RNA 2'-phosphomonoester. The chain is RNA 2',3'-cyclic phosphodiesterase from Methanocaldococcus jannaschii (strain ATCC 43067 / DSM 2661 / JAL-1 / JCM 10045 / NBRC 100440) (Methanococcus jannaschii).